Consider the following 291-residue polypeptide: ATP synthase subunit a (291 aa).

Transmembrane regions (helical) follow at residues 51–71 (FSFTNPSLFMLLTLSLVLLLV), 117–137 (FFPCIFVTFTFLLFCNLQGMI), 146–166 (HFLITLGLSFSIFIGITIVGF), 173–193 (FLSFLLPAGVPLPLAPFLVLL), 213–233 (MMAGHSLVKILSGFAWTMLCM), and 239–259 (FIGDLGPLFIVLALTGPELGV).

Belongs to the ATPase A chain family. In terms of assembly, F-type ATPases have 2 components, CF(1) - the catalytic core - and CF(0) - the membrane proton channel. CF(1) has five subunits: alpha(3), beta(3), gamma(1), delta(1), epsilon(1). CF(0) has three main subunits: a, b and c.

It is found in the mitochondrion inner membrane. In terms of biological role, mitochondrial membrane ATP synthase (F(1)F(0) ATP synthase or Complex V) produces ATP from ADP in the presence of a proton gradient across the membrane which is generated by electron transport complexes of the respiratory chain. F-type ATPases consist of two structural domains, F(1) - containing the extramembraneous catalytic core and F(0) - containing the membrane proton channel, linked together by a central stalk and a peripheral stalk. During catalysis, ATP synthesis in the catalytic domain of F(1) is coupled via a rotary mechanism of the central stalk subunits to proton translocation. Key component of the proton channel; it may play a direct role in the translocation of protons across the membrane. In Vicia faba (Broad bean), this protein is ATP synthase subunit a (ATP6).